Consider the following 145-residue polypeptide: Transcription antitermination protein NusB (145 aa).

The protein belongs to the NusB family.

Involved in transcription antitermination. Required for transcription of ribosomal RNA (rRNA) genes. Binds specifically to the boxA antiterminator sequence of the ribosomal RNA (rrn) operons. The chain is Transcription antitermination protein NusB from Geotalea uraniireducens (strain Rf4) (Geobacter uraniireducens).